We begin with the raw amino-acid sequence, 130 residues long: Small ribosomal subunit protein uS11 (130 aa).

The protein belongs to the universal ribosomal protein uS11 family. In terms of assembly, part of the 30S ribosomal subunit. Interacts with proteins S7 and S18. Binds to IF-3.

Functionally, located on the platform of the 30S subunit, it bridges several disparate RNA helices of the 16S rRNA. Forms part of the Shine-Dalgarno cleft in the 70S ribosome. This is Small ribosomal subunit protein uS11 from Nautilia profundicola (strain ATCC BAA-1463 / DSM 18972 / AmH).